Here is a 236-residue protein sequence, read N- to C-terminus: Heme oxygenase (236 aa).

A heme b-binding site is contributed by His-17.

The protein belongs to the heme oxygenase family.

The protein resides in the plastid. It localises to the chloroplast. The catalysed reaction is heme b + 3 reduced [NADPH--hemoprotein reductase] + 3 O2 = biliverdin IXalpha + CO + Fe(2+) + 3 oxidized [NADPH--hemoprotein reductase] + 3 H2O + H(+). In terms of biological role, catalyzes the opening of the heme ring with the release of iron. Key enzyme in the synthesis of the chromophoric part of the photosynthetic antennae. This is Heme oxygenase (pbsA) from Porphyra purpurea (Red seaweed).